Reading from the N-terminus, the 423-residue chain is Histidine--tRNA ligase (423 aa).

This sequence belongs to the class-II aminoacyl-tRNA synthetase family. Homodimer.

Its subcellular location is the cytoplasm. It carries out the reaction tRNA(His) + L-histidine + ATP = L-histidyl-tRNA(His) + AMP + diphosphate + H(+). The protein is Histidine--tRNA ligase of Rhodococcus jostii (strain RHA1).